Here is a 376-residue protein sequence, read N- to C-terminus: Thymidine kinase (376 aa).

The disordered stretch occupies residues 1–47; sequence MASHAGQQHAPAFGQAARASGPTDGRAASRPSHRQGASEARGDPELP. Residue 56-63 coordinates ATP; the sequence is GPHGVGKT. Glu-84 functions as the Proton acceptor in the catalytic mechanism. Residues Tyr-102 and Gln-126 each coordinate substrate. Arg-217 contributes to the ATP binding site. Arg-223 is a substrate binding site.

It belongs to the herpesviridae thymidine kinase family. In terms of assembly, homodimer.

It carries out the reaction thymidine + ATP = dTMP + ADP + H(+). Its function is as follows. Catalyzes the transfer of the gamma-phospho group of ATP to thymidine to generate dTMP in the salvage pathway of pyrimidine synthesis. The dTMP serves as a substrate for DNA polymerase during viral DNA replication. Allows the virus to be reactivated and to grow in non-proliferative cells lacking a high concentration of phosphorylated nucleic acid precursors. The sequence is that of Thymidine kinase from Human herpesvirus 2 (strain 333) (HHV-2).